The sequence spans 158 residues: Transcription elongation factor GreA (158 aa).

Residues 45-72 (AEYHAAREQQSFIEGRIKQLEGELSHAE) adopt a coiled-coil conformation.

This sequence belongs to the GreA/GreB family.

Functionally, necessary for efficient RNA polymerase transcription elongation past template-encoded arresting sites. The arresting sites in DNA have the property of trapping a certain fraction of elongating RNA polymerases that pass through, resulting in locked ternary complexes. Cleavage of the nascent transcript by cleavage factors such as GreA or GreB allows the resumption of elongation from the new 3'terminus. GreA releases sequences of 2 to 3 nucleotides. The chain is Transcription elongation factor GreA from Xanthomonas campestris pv. campestris (strain ATCC 33913 / DSM 3586 / NCPPB 528 / LMG 568 / P 25).